Consider the following 31-residue polypeptide: Electron transfer flavoprotein-ubiquinone oxidoreductase (31 aa).

FAD is bound at residue 11–25; sequence VVIVGAGGAGLSAAI.

Monomer. Requires [4Fe-4S] cluster as cofactor. FAD is required as a cofactor.

It carries out the reaction a ubiquinone + reduced [electron-transfer flavoprotein] = a ubiquinol + oxidized [electron-transfer flavoprotein] + H(+). Its function is as follows. Accepts electrons from ETF and reduces ubiquinone. The protein is Electron transfer flavoprotein-ubiquinone oxidoreductase of Paracoccus denitrificans.